A 91-amino-acid chain; its full sequence is Small ribosomal subunit protein uS19 (91 aa).

The protein belongs to the universal ribosomal protein uS19 family.

Its function is as follows. Protein S19 forms a complex with S13 that binds strongly to the 16S ribosomal RNA. The protein is Small ribosomal subunit protein uS19 of Methylibium petroleiphilum (strain ATCC BAA-1232 / LMG 22953 / PM1).